Here is an 832-residue protein sequence, read N- to C-terminus: Cadherin-like protein 26 (832 aa).

Residues 1–27 form the signal peptide; it reads MAMRSGRHPSLLLLLVLLLWLLQVSII. At 28 to 614 the chain is on the extracellular side; the sequence is DSVQQETDDL…ELADAEVGLH (587 aa). Cadherin domains are found at residues 35–165, 166–275, 276–396, and 397–500; these read DDLT…APQF, PEKE…RPAF, TQEN…PPAF, and HPQS…VPTL. N-linked (GlcNAc...) asparagine glycans are attached at residues Asn-81, Asn-85, Asn-171, and Asn-177. N-linked (GlcNAc...) asparagine glycosylation occurs at Asn-462. The helical transmembrane segment at 615–635 threads the bilayer; that stretch reads VGALFPVCAAFVALAVALLFL. At 636-832 the chain is on the cytoplasmic side; sequence LRCYFVLEPK…EIYSESGVPS (197 aa). The disordered stretch occupies residues 813 to 832; it reads SLGSKATPFEEIYSESGVPS.

In terms of assembly, homodimer. Component of a cadherin:catenin adhesion complex composed of at least of CDH26, beta-catenin/CTNNB1, alpha-catenin/CTNNA1 and p120 catenin/CTNND1. N-glycosylated. Expressed by epithelial cells of gastrointestinal tissue.

It localises to the cell membrane. Cadherins are calcium-dependent cell adhesion proteins. They preferentially interact with themselves in a homophilic manner in connecting cells; cadherins may thus contribute to the sorting of heterogeneous cell types. Ligand for integrins alpha-E/beta-7, ITGAE:ITGAB7, alpha-4/beta-7, ITGA4:ITGAB7 and alpha-4/beta-1, ITGA4:ITGAB1 through which modulates CD4(+) T cells activation. The sequence is that of Cadherin-like protein 26 (CDH26) from Homo sapiens (Human).